We begin with the raw amino-acid sequence, 92 residues long: DNA-binding protein HU 1 (92 aa).

Position 4 is a phosphothreonine (T4).

The protein belongs to the bacterial histone-like protein family. Homodimer. In terms of assembly, (Microbial infection) Interacts with Bacillus phage SP01 Gp46; the interaction replaces dsDNA from the hbs-DNA complex.

Its subcellular location is the cytoplasm. The protein resides in the nucleoid. Its function is as follows. Histone-like DNA-binding protein which introduces negative supercoils in relaxed plasmid DNA in the presence of topoisomerase I. There are at least 20,000 monomers/cell. Capable of wrapping DNA to stabilize it, and thus to prevent its denaturation under extreme environmental conditions. Binds evenly across chromosome, does not display a preference for AT content. Binds ss- and dsDNA in a sequence non-specific manner; 8 nucleotides are sufficient to bind protein. This chain is DNA-binding protein HU 1, found in Bacillus subtilis (strain 168).